Reading from the N-terminus, the 432-residue chain is Adenylosuccinate synthetase (432 aa).

GTP-binding positions include 13–19 (GDEGKGK) and 41–43 (GHT). D14 functions as the Proton acceptor in the catalytic mechanism. Residues D14 and G41 each contribute to the Mg(2+) site. IMP is bound by residues 14–17 (DEGK), 39–42 (NAGH), T130, R144, Q225, T240, and R304. The active-site Proton donor is H42. Position 300-306 (300-306 (AVTGRPR)) interacts with substrate. Residues R306, 332 to 334 (KLD), and 415 to 417 (STG) contribute to the GTP site.

It belongs to the adenylosuccinate synthetase family. As to quaternary structure, homodimer. Requires Mg(2+) as cofactor.

The protein localises to the cytoplasm. The catalysed reaction is IMP + L-aspartate + GTP = N(6)-(1,2-dicarboxyethyl)-AMP + GDP + phosphate + 2 H(+). It functions in the pathway purine metabolism; AMP biosynthesis via de novo pathway; AMP from IMP: step 1/2. Its function is as follows. Plays an important role in the de novo pathway of purine nucleotide biosynthesis. Catalyzes the first committed step in the biosynthesis of AMP from IMP. This is Adenylosuccinate synthetase from Histophilus somni (strain 2336) (Haemophilus somnus).